A 265-amino-acid polypeptide reads, in one-letter code: MTQGKNPGLKAGGGKKGAKKRTIDPLSRKEWYDFRAPIPFSSKSFGKTLVTKSSGNRIASEEIKGRVVESTLADLKDNSNDKAWRKVKLVIDEVDGRNAKTSFYGLDITRDRLCSMIRKWQTLIEARVDCKTNDGYIIRVFTLAFTKKTSAGKQSSTSTCYAKSSQVRAIRRKINTFITNEAAKLGIAEFSKNLIGEDYTKKIEKETKNIFPLQNITIRKVKVLKRPKLDATKIAELYSHEKKGEKATGRDGAPEEQAAQNLLAQ.

Disordered stretches follow at residues 1–24 (MTQG…RTID) and 240–265 (HEKK…LLAQ). The span at 240–253 (HEKKGEKATGRDGA) shows a compositional bias: basic and acidic residues.

Belongs to the eukaryotic ribosomal protein eS1 family. Component of the small ribosomal subunit. Mature ribosomes consist of a small (40S) and a large (60S) subunit. The 40S subunit contains about 33 different proteins and 1 molecule of RNA (18S). The 60S subunit contains about 49 different proteins and 3 molecules of RNA (25S, 5.8S and 5S).

The protein localises to the cytoplasm. This chain is Small ribosomal subunit protein eS1, found in Tetrahymena thermophila (strain SB210).